Here is a 421-residue protein sequence, read N- to C-terminus: Esterase LipQ (421 aa).

Active-site residues include Ser-249, Asp-344, and His-377.

It belongs to the 'GDXG' lipolytic enzyme family.

The catalysed reaction is hexadecanoate ester + H2O = an aliphatic alcohol + hexadecanoate + H(+). In terms of biological role, shows lipase activity. Is highly immunogenic and may play an important role in the virulence and pathogenesis of M.tuberculosis infection, by altering the balance of cytokines. Significantly down-regulates the expression level of pro-inflammatory cytokines (TNF-alpha and IFN-gamma) and up-regulates the level of anti-inflammatory cytokines such as IL-4 and IL-10 as compared to LPS stimulated macrophages. Also inhibits the expression of iNOS, TLR2 and transcription factor NF-kappa-B in LPS stimulated macrophages whereas the expression of TLR-4 remains unchanged. In Mycobacterium tuberculosis (strain ATCC 25618 / H37Rv), this protein is Esterase LipQ.